The primary structure comprises 209 residues: ADP-ribose pyrophosphatase (209 aa).

Residues 28–29, 51–52, R56, and R79 contribute to the substrate site; these read FF and RE. A Nudix hydrolase domain is found at 55-193; that stretch reads ERGHAAVLLP…KIDNAASVIA (139 aa). A96 serves as a coordination point for Mg(2+). A Nudix box motif is present at residues 97–118; sequence GMIEEGESVEDVARREAIEEAG. Residue M98 participates in substrate binding. Positions 112 and 116 each coordinate Mg(2+). Residues 133–135 and E139 each bind substrate; that span reads SPG. Catalysis depends on E162, which acts as the Proton acceptor. A Mg(2+)-binding site is contributed by E164.

It belongs to the Nudix hydrolase family. NudF subfamily. Homodimer. The cofactor is Mg(2+).

The catalysed reaction is ADP-D-ribose + H2O = D-ribose 5-phosphate + AMP + 2 H(+). Its activity is regulated as follows. Inhibited by phosphorylated compounds such as AMP, ADP, ATP, 3-phosphoglyceric acid and PPi. Not inhibited by orthophosphate. Activity is high in cells grown in low glucose concentrations and decreases dramatically as glucose concentration increases. In terms of biological role, acts on ADP-mannose and ADP-glucose as well as ADP-ribose. Prevents glycogen biosynthesis. The reaction catalyzed by this enzyme is a limiting step of the gluconeogenic process. The chain is ADP-ribose pyrophosphatase (nudF) from Escherichia coli O157:H7.